A 329-amino-acid polypeptide reads, in one-letter code: MTSNSTREVPSPVPAGALGLSLALASLIVAANLLLAVGIAGDRRLRSPPAGCFFLSLLLAGLLTGLALPALPVLWSQSRRGYWSCLFLYLAPNFCFLSLLANLLLVHGERYMAVLRPLRPRGSMRLALLLTWAAPLLFASLPALGWNHWAPGGNCSSQAVFPAPYLYLEIYGLLLPAVGAAALLSVRVLVTAHRQLQDIRRLERAVCRGAPSALARALTWRQARAQAGATLLFGLCWGPYVATLLLSVLAFEQRPPLGPGTLLSLISLGSASAAAVPVAMGLGDQRYTGPWRVAAQKWLRMLRGRPQSSPGPSTAYHTSSQSSVDLDLN.

Topologically, residues 1–19 (MTSNSTREVPSPVPAGALG) are extracellular. Asn-4 carries N-linked (GlcNAc...) asparagine glycosylation. Residues 20 to 40 (LSLALASLIVAANLLLAVGIA) form a helical membrane-spanning segment. Residues 41–52 (GDRRLRSPPAGC) lie on the Cytoplasmic side of the membrane. The chain crosses the membrane as a helical span at residues 53-73 (FFLSLLLAGLLTGLALPALPV). The Extracellular segment spans residues 74–85 (LWSQSRRGYWSC). A disulfide bridge connects residues Cys-85 and Cys-155. Residues 86–106 (LFLYLAPNFCFLSLLANLLLV) form a helical membrane-spanning segment. Topologically, residues 107-125 (HGERYMAVLRPLRPRGSMR) are cytoplasmic. Residues 126-146 (LALLLTWAAPLLFASLPALGW) form a helical membrane-spanning segment. The Extracellular portion of the chain corresponds to 147–165 (NHWAPGGNCSSQAVFPAPY). N-linked (GlcNAc...) asparagine glycosylation occurs at Asn-154. Residues 166 to 186 (LYLEIYGLLLPAVGAAALLSV) form a helical membrane-spanning segment. Residues 187 to 230 (RVLVTAHRQLQDIRRLERAVCRGAPSALARALTWRQARAQAGAT) are Cytoplasmic-facing. A helical membrane pass occupies residues 231–251 (LLFGLCWGPYVATLLLSVLAF). At 252–261 (EQRPPLGPGT) the chain is on the extracellular side. Residues 262-282 (LLSLISLGSASAAAVPVAMGL) traverse the membrane as a helical segment. At 283–329 (GDQRYTGPWRVAAQKWLRMLRGRPQSSPGPSTAYHTSSQSSVDLDLN) the chain is on the cytoplasmic side. A disordered region spans residues 304 to 329 (GRPQSSPGPSTAYHTSSQSSVDLDLN). Positions 306 to 329 (PQSSPGPSTAYHTSSQSSVDLDLN) are enriched in polar residues.

It belongs to the G-protein coupled receptor 1 family.

It is found in the cell membrane. Its function is as follows. Receptor for bile acid. Bile acid-binding induces its internalization, activation of extracellular signal-regulated kinase and intracellular cAMP production. May be involved in the suppression of macrophage functions by bile acids. Involved in bile acid promoted GLP1R secretion. The polypeptide is G-protein coupled bile acid receptor 1 (GPBAR1) (Bos taurus (Bovine)).